A 1399-amino-acid polypeptide reads, in one-letter code: MTSAAELKKPPLAPKPKLVGTNNKPPPPPIAPKPDIGSASVPRLTKKTKPAIAPKPKVPTNSVVQDIKHPPSKKPTLNLEEREPELPESTGKSNCKDVRDPHSDYILPTCSCSSGCIHEPRTRETQCVEQLVLEPLGMKENLENSKNGESSKRGSSWDSSSEKCRGQSGVVLKASILEEKLKEVLTQQRSPCGSPGRHRAPKKPEMNGDHSCTRQIRIEFADVSSSLTGFEKVPAHHNCHPQLPRDESQTLKTCQDGSAESRGHTDSCEPENKRVASDGISQKTEVKGLGPLEIHLLPYTSKFPTPKPRKTHAAARLRRQKHVDTPGESTEEPGNSNNGSSCLLEDYCLKNNKVSVLRQNALYNQGPVDEVRPANQRALTGDSNSGGQDSVGSQKAVQQQTPSLDTDSSLTSDSSGSGVSPAVDKETTYTQCSTQPLSLPKQVTSACTDQPPATCNPEVSAPPIQKESSSSRIIPKKPQRHSLPAAGVLKKAASEELVEKSSSGKETNVEKGLHRNYLHHPGPPNHGASASPFDMPNPTSEKPVWKLPHPILPFSGSPEALKRVTLSLNNEPSVSLTKPRAKSLSAVDADRCNKPCKDPPKKTSFKKLINVKLSIGFIKSDFQKIRSKSCQHGDVSAGHPLAREPKGLESDWQGLATGEEKRSKPTKAHSAENCSLESQKVKSWGQSSAVNGQRAESLDDRILSRHTSCTGDFGPEYENVRHYEEIPEYENLPFVMAGRNTPDLGWQNSSSVEDTDASLYEVEEPYNAPDGQLQLDPRHQPCSSGTSQEGKDALHLGLSDLPSDEEVINSSDEDDVSSESSKGEPDPLEDKQDEDAGMKSKVHHIAKEIMSSEKVFVDVLKLLHIDFRGAVAHASRQLGKPVIEDRILNQILYYLPQLYELNRDLLKELEERMLTWTEQQRIADIFVKKGPYLKMYSTYIKEFDKNVALLDEQCKKNPGFAAVVREFEMSPRCANLALKHYLLKPVQRIPQYRLLLTDYLKNLLEDSVDHRDTQDALAVVIEVANHANDTMKQGDNFQKLMQIQYSLSGHHEIVQPGRVFLKEGTLMKLSRKVMQPRMFFLFNDALLYTTPMQSGMYKLNNMLSLAGMKVRKPTQEAYQNELKIESVERSFILSASSAAERDDWLEAISSSIEEYAKKRITFCPSRSLDEDSERKEEVSPLGAKAPIWIPDTRATMCMICTSEFTLTWRRHHCRACGKIVCQACSSNKYGLDYLKGQLARVCEHCFQELQKLDHQLSPRVGSPGNHKSPSSALSSVLHSIPSGRKQKKIPAALKEVSANTEDSTMSGYLYRSKGSKKPWKHLWFVIKNKVLYTYAASEDVAALESQPLLGFTVTLVKDENSESKVFQLLHKGMVFYVFKADDAHSTQRWIDAFQEGTVL.

6 disordered regions span residues 1 to 99 (MTSA…KDVR), 138 to 164 (MKENLENSKNGESSKRGSSWDSSSEKC), 185 to 210 (LTQQRSPCGSPGRHRAPKKPEMNGDH), 235 to 281 (AHHN…DGIS), 299 to 341 (YTSK…NGSS), and 367 to 479 (PVDE…KKPQ). Positions 50–60 (PAIAPKPKVPT) are enriched in low complexity. A compositionally biased stretch (basic and acidic residues) spans 259 to 276 (AESRGHTDSCEPENKRVA). The span at 307–321 (KPRKTHAAARLRRQK) shows a compositional bias: basic residues. 2 stretches are compositionally biased toward polar residues: residues 332 to 341 (EPGNSNNGSS) and 377 to 402 (RALTGDSNSGGQDSVGSQKAVQQQTP). Residues 403–418 (SLDTDSSLTSDSSGSG) show a composition bias toward low complexity. Over residues 428 to 453 (TYTQCSTQPLSLPKQVTSACTDQPPA) the composition is skewed to polar residues. Phosphoserine is present on residues S494, S531, and S583. Positions 515–542 (RNYLHHPGPPNHGASASPFDMPNPTSEK) are disordered. Disordered regions lie at residues 631–650 (QHGDVSAGHPLAREPKGLES) and 657–678 (TGEEKRSKPTKAHSAENCSLES). Phosphoserine occurs at positions 670 and 697. The interval 768 to 840 (APDGQLQLDP…KQDEDAGMKS (73 aa)) is disordered. Positions 802–817 (PSDEEVINSSDEDDVS) are enriched in acidic residues. Residues 821–838 (SKGEPDPLEDKQDEDAGM) are compositionally biased toward basic and acidic residues. Residues 841–1030 (KVHHIAKEIM…IEVANHANDT (190 aa)) form the DH domain. A PH 1 domain is found at 1059 to 1153 (VFLKEGTLMK…WLEAISSSIE (95 aa)). A Phosphoserine modification is found at S1167. Residues 1191–1250 (DTRATMCMICTSEFTLTWRRHHCRACGKIVCQACSSNKYGLDYLKGQLARVCEHCFQELQ) form an FYVE-type zinc finger. Positions 1197, 1200, 1213, 1216, 1221, 1224, 1242, and 1245 each coordinate Zn(2+). The 97-residue stretch at 1302–1398 (DSTMSGYLYR…WIDAFQEGTV (97 aa)) folds into the PH 2 domain.

It is found in the cytoplasm. Its subcellular location is the cytoskeleton. Its function is as follows. May activate CDC42, a member of the Ras-like family of Rho- and Rac proteins, by exchanging bound GDP for free GTP. May play a role in regulating the actin cytoskeleton and cell shape. This chain is FYVE, RhoGEF and PH domain-containing protein 6 (Fgd6), found in Mus musculus (Mouse).